We begin with the raw amino-acid sequence, 514 residues long: Pleiotropic regulator 1 (514 aa).

Position 1 is an N-acetylmethionine (M1). A Phosphoserine modification is found at S119. Positions K135–T160 are disordered. S201 carries the post-translational modification Phosphoserine. WD repeat units lie at residues G202–S241, G244–H283, G286–T325, G328–T367, N370–S410, G411–R449, and D460–T499. S391 carries the post-translational modification Phosphoserine.

The protein belongs to the WD repeat PRL1/PRL2 family. In terms of assembly, identified in the spliceosome C complex. Component of the PRP19-CDC5L splicing complex composed of a core complex comprising a homotetramer of PRPF19, CDC5L, PLRG1 and BCAS2, and at least three less stably associated proteins CTNNBL1, CWC15 and HSPA8. Interacts (via its WD40 repeat domain) directly with CDC5L (via its C-terminal); the interaction is required for mRNA splicing but not for spliceosome assembly. Component of the minor spliceosome, which splices U12-type introns. Within this complex, interacts with CRIPT. Also interacts directly in the complex with BCAS2 and PRPF19. Interacts with USB1.

It is found in the nucleus. The protein localises to the nucleus speckle. Its function is as follows. Involved in pre-mRNA splicing as component of the spliceosome. Component of the PRP19-CDC5L complex that forms an integral part of the spliceosome and is required for activating pre-mRNA splicing. As a component of the minor spliceosome, involved in the splicing of U12-type introns in pre-mRNAs. The sequence is that of Pleiotropic regulator 1 (PLRG1) from Homo sapiens (Human).